The chain runs to 376 residues: Chaperone protein DnaJ (376 aa).

Residues 5 to 70 (DFYEVLGVER…SKRAAYDQYG (66 aa)) form the J domain. The CR-type zinc finger occupies 135–213 (GTTVTIRVPT…CHGQGRVEEQ (79 aa)). Residues Cys148, Cys151, Cys165, Cys168, Cys187, Cys190, Cys201, and Cys204 each coordinate Zn(2+). CXXCXGXG motif repeat units lie at residues 148–155 (CKTCDGSG), 165–172 (CTTCGGIG), 187–194 (CPRCHGSG), and 201–208 (CGSCHGQG).

The protein belongs to the DnaJ family. As to quaternary structure, homodimer. It depends on Zn(2+) as a cofactor.

The protein resides in the cytoplasm. Participates actively in the response to hyperosmotic and heat shock by preventing the aggregation of stress-denatured proteins and by disaggregating proteins, also in an autonomous, DnaK-independent fashion. Unfolded proteins bind initially to DnaJ; upon interaction with the DnaJ-bound protein, DnaK hydrolyzes its bound ATP, resulting in the formation of a stable complex. GrpE releases ADP from DnaK; ATP binding to DnaK triggers the release of the substrate protein, thus completing the reaction cycle. Several rounds of ATP-dependent interactions between DnaJ, DnaK and GrpE are required for fully efficient folding. Also involved, together with DnaK and GrpE, in the DNA replication of plasmids through activation of initiation proteins. This Stutzerimonas stutzeri (Pseudomonas stutzeri) protein is Chaperone protein DnaJ.